Consider the following 290-residue polypeptide: tRNA (adenine(58)-N(1))-methyltransferase catalytic subunit TRMT61A (290 aa).

N-acetylserine is present on S2. Substrate regions lie at residues 20 to 22 (LGH), 35 to 42 (QTQTRHGV), 64 to 65 (GW), 85 to 89 (QILYS), and 110 to 117 (SGTGSGSV). S-adenosyl-L-methionine contacts are provided by residues L87, 114-116 (SGS), E135, R140, 163-164 (DV), and D181. Substrate stretches follow at residues 180–183 (LDIP) and 205–212 (SFSPCIEQ). The residue at position 264 (S264) is a Phosphoserine. T279 contacts substrate.

It belongs to the class I-like SAM-binding methyltransferase superfamily. TRM61 family. Heterotetramer; composed of two copies of TRMT6 and two copies of TRMT61A.

The protein localises to the nucleus. It catalyses the reaction adenosine(58) in tRNA + S-adenosyl-L-methionine = N(1)-methyladenosine(58) in tRNA + S-adenosyl-L-homocysteine + H(+). The catalysed reaction is an adenosine in mRNA + S-adenosyl-L-methionine = an N(1)-methyladenosine in mRNA + S-adenosyl-L-homocysteine + H(+). Catalytic subunit of tRNA (adenine-N(1)-)-methyltransferase, which catalyzes the formation of N(1)-methyladenine at position 58 (m1A58) in initiator methionyl-tRNA. Catalytic subunit of mRNA N(1)-methyltransferase complex, which mediates methylation of adenosine residues at the N(1) position of a small subset of mRNAs: N(1) methylation takes place in tRNA T-loop-like structures of mRNAs and is only present at low stoichiometries. The chain is tRNA (adenine(58)-N(1))-methyltransferase catalytic subunit TRMT61A (Trmt61a) from Mus musculus (Mouse).